A 421-amino-acid polypeptide reads, in one-letter code: MSKTHLTEQKFSDFSLHPKVVEALEKKGFHNCTPIQALALPLTLAGRDVAGQAQTGTGKTMAFLTSMFHYLLSHPAIADRKVNKPRALIMAPTRELAVQIHADAEPLAEATGLKLGLAYGGDGYDKQLKVLESGVDILIGTTGRLIDYAKQNHINLGAIQVVVLDEADRMYDLGFIKDIRWLFRRMPPANQRLNMLFSATLSYRVRELAFEQMNNAEYIEVEPEQKTGHRIKEELFYPSNEEKMRLLQTLIEEEWPDRAIIFANTKHRCEEIWGHLAADGHRVGLLTGDVAQKKRLRILDEFTRGDLDILVATDVAARGLHIPAVTHVFNYDLPDDCEDYVHRIGRTGRAGASGHSISLACEEYALNLPAIETYIGHSIPVSKYNPDALMTDLPKPLRLTRPRTGNGPRRTGAPRNRRRSG.

The short motif at 9-37 (QKFSDFSLHPKVVEALEKKGFHNCTPIQA) is the Q motif element. Positions 40 to 219 (LPLTLAGRDV…FEQMNNAEYI (180 aa)) constitute a Helicase ATP-binding domain. 53–60 (AQTGTGKT) lines the ATP pocket. Residues 165-168 (DEAD) carry the DEAD box motif. The region spanning 245 to 390 (RLLQTLIEEE…VSKYNPDALM (146 aa)) is the Helicase C-terminal domain. The segment at 392–421 (DLPKPLRLTRPRTGNGPRRTGAPRNRRRSG) is disordered. Residues 402–414 (PRTGNGPRRTGAP) show a composition bias toward low complexity.

Belongs to the DEAD box helicase family. RhlB subfamily. Component of the RNA degradosome, which is a multiprotein complex involved in RNA processing and mRNA degradation.

It is found in the cytoplasm. It catalyses the reaction ATP + H2O = ADP + phosphate + H(+). Functionally, DEAD-box RNA helicase involved in RNA degradation. Has RNA-dependent ATPase activity and unwinds double-stranded RNA. The protein is ATP-dependent RNA helicase RhlB of Shigella dysenteriae serotype 1 (strain Sd197).